Here is a 583-residue protein sequence, read N- to C-terminus: MLO-like protein 6 (583 aa).

Residues methionine 1–threonine 15 are Extracellular-facing. Residues tryptophan 16–isoleucine 36 traverse the membrane as a helical segment. The Cytoplasmic portion of the chain corresponds to histidine 37–glutamate 61. A helical transmembrane segment spans residues leucine 62–isoleucine 82. Over cysteine 83–histidine 161 the chain is Extracellular. The helical transmembrane segment at isoleucine 162–glycine 182 threads the bilayer. Residues lysine 183 to aspartate 284 are Cytoplasmic-facing. Residues phenylalanine 285–threonine 305 form a helical membrane-spanning segment. The Extracellular segment spans residues asparagine 306–leucine 314. A helical transmembrane segment spans residues tryptophan 315–isoleucine 335. At threonine 336 to arginine 368 the chain is on the cytoplasmic side. A helical membrane pass occupies residues phenylalanine 369–valine 389. At tryptophan 390–arginine 411 the chain is on the extracellular side. Residues isoleucine 412 to leucine 432 form a helical membrane-spanning segment. The Cytoplasmic segment spans residues valine 433 to arginine 583. The tract at residues glutamate 447 to arginine 468 is calmodulin-binding. A disordered region spans residues lysine 461–arginine 583. Low complexity predominate over residues serine 470 to threonine 484. A compositionally biased stretch (basic and acidic residues) spans arginine 541–phenylalanine 551.

It belongs to the MLO family.

The protein resides in the membrane. May be involved in modulation of pathogen defense and leaf cell death. Activity seems to be regulated by Ca(2+)-dependent calmodulin binding and seems not to require heterotrimeric G proteins. The protein is MLO-like protein 6 (MLO6) of Arabidopsis thaliana (Mouse-ear cress).